The primary structure comprises 204 residues: Large ribosomal subunit protein eL15 (204 aa).

Belongs to the eukaryotic ribosomal protein eL15 family. As to quaternary structure, component of the large ribosomal subunit.

It is found in the cytoplasm. In terms of biological role, component of the large ribosomal subunit. The ribosome is a large ribonucleoprotein complex responsible for the synthesis of proteins in the cell. This chain is Large ribosomal subunit protein eL15 (rpl15), found in Carassius auratus (Goldfish).